A 149-amino-acid polypeptide reads, in one-letter code: Evolved beta-galactosidase subunit beta (149 aa).

As to quaternary structure, heterooctamer of 4 alpha and 4 beta subunits.

Required for full activity of the EbgA enzyme. Exact function not known. This chain is Evolved beta-galactosidase subunit beta (ebgC), found in Escherichia coli O6:H1 (strain CFT073 / ATCC 700928 / UPEC).